Consider the following 376-residue polypeptide: Carbamoyl phosphate synthase small chain (376 aa).

The CPSase stretch occupies residues 1–184 (MKAILALADG…SEGYQQQTGE (184 aa)). Positions 45, 236, and 238 each coordinate L-glutamine. Residues 188–374 (KVVAYDFGIK…ADLMEKNRQS (187 aa)) form the Glutamine amidotransferase type-1 domain. Catalysis depends on Cys-263, which acts as the Nucleophile. L-glutamine is bound by residues Leu-264, Gln-267, Asn-305, Gly-307, and Phe-308. Active-site residues include His-347 and Glu-349.

Belongs to the CarA family. As to quaternary structure, composed of two chains; the small (or glutamine) chain promotes the hydrolysis of glutamine to ammonia, which is used by the large (or ammonia) chain to synthesize carbamoyl phosphate. Tetramer of heterodimers (alpha,beta)4.

The enzyme catalyses hydrogencarbonate + L-glutamine + 2 ATP + H2O = carbamoyl phosphate + L-glutamate + 2 ADP + phosphate + 2 H(+). It carries out the reaction L-glutamine + H2O = L-glutamate + NH4(+). The protein operates within amino-acid biosynthesis; L-arginine biosynthesis; carbamoyl phosphate from bicarbonate: step 1/1. It functions in the pathway pyrimidine metabolism; UMP biosynthesis via de novo pathway; (S)-dihydroorotate from bicarbonate: step 1/3. Its function is as follows. Small subunit of the glutamine-dependent carbamoyl phosphate synthetase (CPSase). CPSase catalyzes the formation of carbamoyl phosphate from the ammonia moiety of glutamine, carbonate, and phosphate donated by ATP, constituting the first step of 2 biosynthetic pathways, one leading to arginine and/or urea and the other to pyrimidine nucleotides. The small subunit (glutamine amidotransferase) binds and cleaves glutamine to supply the large subunit with the substrate ammonia. This is Carbamoyl phosphate synthase small chain from Syntrophotalea carbinolica (strain DSM 2380 / NBRC 103641 / GraBd1) (Pelobacter carbinolicus).